The primary structure comprises 636 residues: Threonine--tRNA ligase (636 aa).

Residues 1-59 enclose the TGS domain; it reads MPIITLPDGTKKIFEQVVSVEQVAKSMGLVKAALAGEVDGELVSTSFLIKTDANLTIIT. The tract at residues 240–531 is catalytic; the sequence is DHRKIGKTQD…LIEHYEGAYP (292 aa). Residues cysteine 331, histidine 382, and histidine 508 each contribute to the Zn(2+) site.

The protein belongs to the class-II aminoacyl-tRNA synthetase family. Homodimer. Zn(2+) is required as a cofactor.

It is found in the cytoplasm. The catalysed reaction is tRNA(Thr) + L-threonine + ATP = L-threonyl-tRNA(Thr) + AMP + diphosphate + H(+). Catalyzes the attachment of threonine to tRNA(Thr) in a two-step reaction: L-threonine is first activated by ATP to form Thr-AMP and then transferred to the acceptor end of tRNA(Thr). Also edits incorrectly charged L-seryl-tRNA(Thr). This Vesicomyosocius okutanii subsp. Calyptogena okutanii (strain HA) protein is Threonine--tRNA ligase.